A 422-amino-acid chain; its full sequence is Tryptophan synthase beta chain 1 (422 aa).

An N6-(pyridoxal phosphate)lysine modification is found at Lys-107.

This sequence belongs to the TrpB family. As to quaternary structure, tetramer of two alpha and two beta chains. Requires pyridoxal 5'-phosphate as cofactor.

It carries out the reaction (1S,2R)-1-C-(indol-3-yl)glycerol 3-phosphate + L-serine = D-glyceraldehyde 3-phosphate + L-tryptophan + H2O. Its pathway is amino-acid biosynthesis; L-tryptophan biosynthesis; L-tryptophan from chorismate: step 5/5. Functionally, the beta subunit is responsible for the synthesis of L-tryptophan from indole and L-serine. This is Tryptophan synthase beta chain 1 (trpB1) from Sulfurisphaera tokodaii (strain DSM 16993 / JCM 10545 / NBRC 100140 / 7) (Sulfolobus tokodaii).